Reading from the N-terminus, the 947-residue chain is Protein translocase subunit SecA (947 aa).

ATP contacts are provided by residues Gln-85, 103–107, and Asp-514; that span reads GEGKT. Residues 864–947 form a disordered region; that stretch reads AAPSLDKGAQ…QAKGGRRRKK (84 aa). A compositionally biased stretch (basic and acidic residues) spans 884-900; the sequence is PEIRAKGLDAPQRRDLH. Basic residues predominate over residues 934–947; sequence ERRKQAKGGRRRKK.

It belongs to the SecA family. Monomer and homodimer. Part of the essential Sec protein translocation apparatus which comprises SecA, SecYEG and auxiliary proteins SecDF. Other proteins may also be involved.

The protein localises to the cell membrane. Its subcellular location is the cytoplasm. It carries out the reaction ATP + H2O + cellular proteinSide 1 = ADP + phosphate + cellular proteinSide 2.. Functionally, part of the Sec protein translocase complex. Interacts with the SecYEG preprotein conducting channel. Has a central role in coupling the hydrolysis of ATP to the transfer of proteins into and across the cell membrane, serving as an ATP-driven molecular motor driving the stepwise translocation of polypeptide chains across the membrane. This is Protein translocase subunit SecA from Streptomyces lividans.